Consider the following 395-residue polypeptide: Mitogen-activated protein kinase 6 (395 aa).

Residues 1–35 (MDGGSGQPAADTEMTEAPGGFPAAAPSPQMPGIEN) are disordered. The span at 17 to 27 (APGGFPAAAPS) shows a compositional bias: low complexity. Residues 63–348 (KPPIMPIGKG…VLDALAHPYL (286 aa)) enclose the Protein kinase domain. Residues 69–77 (IGKGAYGIV) and lysine 92 each bind ATP. Catalysis depends on aspartate 189, which acts as the Proton acceptor. Threonine 221 is subject to Phosphothreonine. The TXY motif lies at 221–223 (TEY). Tyrosine 223 is subject to Phosphotyrosine. At threonine 226 the chain carries Phosphothreonine.

The protein belongs to the protein kinase superfamily. CMGC Ser/Thr protein kinase family. MAP kinase subfamily. As to quaternary structure, interacts with MEKK1, MKK1 and MKK2. May form a ternary complex with MEKK1 and MKK1 or MKK2. Interacts with NDPK2, AP2C1, MKP1 and PTP1. Interacts with DSPTP1B/MKP2, especially during HR-like responses triggered by fungal elicitors. Interacts with MKK4, MKK5 and MKK6. Binds to LIP5. Interacts with VQ4 and IKU1/VQ14. Interacts with RACK1A, RACK1B and RACK1C. Interacts with PTP1. Interacts with FLZ9. Binds to BASL and YDA. Dually phosphorylated on Thr-221 and Tyr-223, which activates the enzyme. Dephosphorylated by DSPTP1B/MKP2.

It is found in the cytoplasm. The protein localises to the nucleus. It localises to the cell cortex. It carries out the reaction L-seryl-[protein] + ATP = O-phospho-L-seryl-[protein] + ADP + H(+). It catalyses the reaction L-threonyl-[protein] + ATP = O-phospho-L-threonyl-[protein] + ADP + H(+). Activated by threonine and tyrosine phosphorylation. Activated by the MAP kinase kinases MKK2, MKK3, MKK4, MKK5, MKK7 and MKK9. Activated in response to touch, wounding, low temperature, low humidity, salt stress, hydrogen peroxide, ozone, ACC (an ethylene precursor), jasmonic acid (JA), mastoparan and UVC. Activated in response to elicitors: oligogalacturonides, hexameric chitin fragments, fungal xylanase, and the bacterial flagellin and harpin. Activated upon Pseudomonas syringae pv. tomato DC3000 infection. Repressed by the protein phosphatase 2C AP2C1 and the protein-tyrosine-phosphatases MKP1 and PTP1. Repressed by DSPTP1B/MKP2-mediated dephosphorylation. Activated by polarized BASL. Triggered by MKKK20 in response to various abiotic stresses, including osmotic stress, cold and reactive oxygen species (ROS). Activated by MKK5 in response to abscisic acid (ABA). Functionally, mitogen-activated protein kinase (MAPK) which regulates abscisic acid (ABA) responses in a MAPKKK20-MKK5-MPK6 cascade involved in root growth (e.g. root cell division and elongation) and stomatal response. Involved in oxidative stress-mediated signaling cascade (such as ozone). Involved in the innate immune MAP kinase signaling cascade (MEKK1, MKK4/MKK5 and MPK3/MPK6) downstream of bacterial flagellin receptor FLS2. May be involved in hypersensitive response (HR)-mediated signaling cascade by modulating LIP5 phosphorylation and subsequent multivesicular bodies (MVBs) trafficking. May phosphorylate regulators of WRKY transcription factors. Phosphorylates 1-aminocyclopropane-1-carboxylic acid synthases (ACS2 and ACS6) and may be involved in the regulation of bacterial elicitor flagellin-induced ethylene production. Regulates locally gene-mediated and basal resistance response to certain pathogens. May be involved in the cold and salinity stress-mediated MAP kinase signaling cascade (MEKK1, MKK1/MKK2 and MPK4/MPK6). MKK1-MPK6 module mediates abscisic acid (ABA)-dependent CAT1 expression with H(2)O(2) production and response to drought and salt stress. MKK1-MPK6 module is also involved in sugar signaling during the process of seed germination. MKK3-MPK6 module plays an important role in the jasmonate signal transduction pathway through the negative regulation of MYC2/JIN1 expression. MKK9-MPK3/MPK6 module phosphorylates and activates EIN3, leading to the promotion of EIN3-mediated transcription in ethylene signaling. MPK3/MPK6 cascade regulates camalexin synthesis through transcriptional regulation of the biosynthetic genes after pathogen infection. MKK9-MPK6 module positively regulates leaf senescence. YDA-MKK4/MKK5-MPK3/MPK6 module regulates stomatal cell fate before the guard mother cell (GMC) is specified. When activated, reinforces the feedback loop by phosphorylating BASL, and inhibits stomatal fate by phosphorylating SPCH. This MAPK cascade also functions downstream of the ER receptor in regulating coordinated local cell proliferation, which shapes the morphology of plant organs. The protein is Mitogen-activated protein kinase 6 of Arabidopsis thaliana (Mouse-ear cress).